The primary structure comprises 535 residues: Phosphoenolpyruvate carboxykinase (ATP) 1 (535 aa).

The substrate site is built by Arg58, Tyr193, and Lys199. Residues Lys199, His218, and 234-242 contribute to the ATP site; that span reads GLSGTGKTT. Positions 199 and 218 each coordinate Mn(2+). Asp255 contacts Mn(2+). ATP is bound by residues Glu283, Arg321, 440 to 441, and Thr446; that span reads RI. A substrate-binding site is contributed by Arg321.

It belongs to the phosphoenolpyruvate carboxykinase (ATP) family. It depends on Mn(2+) as a cofactor.

The protein localises to the cytoplasm. The catalysed reaction is oxaloacetate + ATP = phosphoenolpyruvate + ADP + CO2. It participates in carbohydrate biosynthesis; gluconeogenesis. Involved in the gluconeogenesis. Catalyzes the conversion of oxaloacetate (OAA) to phosphoenolpyruvate (PEP) through direct phosphoryl transfer between the nucleoside triphosphate and OAA. The polypeptide is Phosphoenolpyruvate carboxykinase (ATP) 1 (Salinibacter ruber (strain DSM 13855 / M31)).